The primary structure comprises 143 residues: 18 kDa heat shock protein (143 aa).

The region spanning 23-135 is the sHSP domain; the sequence is TWSRPTAMPM…KRRRVKVGQG (113 aa).

Belongs to the small heat shock protein (HSP20) family.

The polypeptide is 18 kDa heat shock protein (hsp18) (Streptomyces albus G).